Here is a 251-residue protein sequence, read N- to C-terminus: MTQQLKFILTREEAASKGVSRPSDLVKLEEEAMILARAPISGVQDAVLGLASSDRIFLGVNVEFEGLPLHHSISAEQFLVANLALNFEQELHACLIPSRFYLESFEEDVPLLLVPQNNRLAHSDPFSAAEICSNPEHCSHLKCRALTAANKSNAQYSKCPSGVALICEGEVYGGWCIESAAYNLSLGPVQAALVDFMARGEGKGFEMITGAVLVEMNDAKVSQEATARILLKTIAPGCNFSVFRCHKTAEN.

61–63 (NVE) is a binding site for substrate. The active-site Proton donor is the Glu76. The CMP/dCMP-type deaminase domain maps to 136 to 251 (EHCSHLKCRA…VFRCHKTAEN (116 aa)).

It belongs to the cytidine and deoxycytidylate deaminase family. In terms of assembly, homodimer.

This Arabidopsis thaliana (Mouse-ear cress) protein is Probable inactive cytidine deaminase 4 (CDA4).